A 484-amino-acid chain; its full sequence is Zinc metalloproteinase-disintegrin BlatH1 (484 aa).

A signal peptide spans 1 to 20; the sequence is MIQVLLVTICLAALPYQGSS. Residues 21-190 constitute a propeptide that is removed on maturation; the sequence is IILESGNVND…KKASQSNLTP (170 aa). The residue at position 191 (Glu191) is a Pyrrolidone carboxylic acid (Glu). The Peptidase M12B domain occupies 199–395; that stretch reads KYVELVIVAD…QNSQCILNEP (197 aa). A Ca(2+)-binding site is contributed by Glu202. An N-linked (GlcNAc...) asparagine glycan is attached at Asn259. Asp286 contacts Ca(2+). An N-linked (GlcNAc...) asparagine glycan is attached at Asn297. 3 disulfides stabilise this stretch: Cys310-Cys390, Cys350-Cys374, and Cys352-Cys357. Residue His335 participates in Zn(2+) binding. Glu336 is an active-site residue. Zn(2+)-binding residues include His339 and His345. An N-linked (GlcNAc...) asparagine glycan is attached at Asn373. 7 residues coordinate Ca(2+): Cys390, Asn393, Val405, Asn408, Glu412, Glu415, and Asp418. Residues 403–484 form the Disintegrin domain; sequence PPVCGNEILE…GQSADCPSNG (82 aa). Disulfide bonds link Cys406–Cys425, Cys417–Cys435, Cys419–Cys430, Cys429–Cys452, Cys443–Cys449, Cys448–Cys473, and Cys461–Cys480. The TDN-tripeptide signature appears at 465–467; the sequence is TDN.

This sequence belongs to the venom metalloproteinase (M12B) family. P-II subfamily. P-IIc sub-subfamily. Homodimer. Zn(2+) is required as a cofactor. The N-terminus is blocked. In terms of tissue distribution, expressed by the venom gland.

The protein resides in the secreted. With respect to regulation, platelet aggregation in inhibited by the metalloproteinase inhibitors EDTA and Batimastat. The hemorrhagic activity is not inhibited by the plasma proteinase inhibitor alpha2-macroglobulin, although the SVMP is able to cleave this plasma inhibitor, generating a 90 kDa product. Its function is as follows. Snake venom zinc metalloprotease-disintegrin that hydrolyzes azocasein, gelatin and fibrinogen (Aalpha and Bbeta chains and partially gamma-chain), and exerts a potent local and systemic hemorrhagic activity in mice. It inhibits ADP- and collagen-induced human platelet aggregation (IC(50) = 0.3 uM and 0.7 uM for ADP and collagen, respectively). This inhibition is dependent of protease activity, and probably occurs through the degradation of an unknown platelet receptor. The protein is Zinc metalloproteinase-disintegrin BlatH1 of Bothriechis lateralis (Side-striped palm pitviper).